A 561-amino-acid chain; its full sequence is Arf-GAP domain and FG repeat-containing protein 1 (561 aa).

An Arf-GAP domain is found at 11–135 (EKHLKMLRDM…WYVPPEQAKV (125 aa)). Residues 29 to 52 (CFDCDQRGPTYVNMTVGSFVCTSC) form a C4-type zinc finger. A Phosphoserine modification is found at serine 167. Positions 171–193 (LHLNKGTPTQSPVVGRSQGQQQE) are disordered. The span at 176–191 (GTPTQSPVVGRSQGQQ) shows a compositional bias: polar residues. A Phosphothreonine modification is found at threonine 177. Phosphoserine is present on residues serine 181 and serine 362. Serine 367 carries O-linked (GlcNAc) serine glycosylation. Residues 409–451 (PVGASPQTQPASSGPAPFGATPSTNPFVAATGPSAASSTNPFQ) are disordered. Residues 442-451 (SAASSTNPFQ) show a composition bias toward polar residues.

Interacts with EPS15R and EPS15. Interacts with FCHO1. O-glycosylated.

The protein localises to the nucleus. It is found in the cytoplasmic vesicle. Functionally, required for vesicle docking or fusion during acrosome biogenesis. May play a role in RNA trafficking or localization. In Rattus norvegicus (Rat), this protein is Arf-GAP domain and FG repeat-containing protein 1 (Agfg1).